Consider the following 109-residue polypeptide: Nucleoid-associated protein BU482 (109 aa).

Belongs to the YbaB/EbfC family. As to quaternary structure, homodimer.

It is found in the cytoplasm. The protein resides in the nucleoid. Its function is as follows. Binds to DNA and alters its conformation. May be involved in regulation of gene expression, nucleoid organization and DNA protection. This Buchnera aphidicola subsp. Acyrthosiphon pisum (strain APS) (Acyrthosiphon pisum symbiotic bacterium) protein is Nucleoid-associated protein BU482.